The sequence spans 370 residues: UPF0284 protein PCC7424_2681 (370 aa).

This sequence belongs to the UPF0284 family.

The sequence is that of UPF0284 protein PCC7424_2681 from Gloeothece citriformis (strain PCC 7424) (Cyanothece sp. (strain PCC 7424)).